Here is a 1031-residue protein sequence, read N- to C-terminus: uncharacterized protein (1031 aa).

Residues 50 to 85 (FKVQINLKTAAAHLDCSCSNDKQNCVHIIAALLKYN) form an SWIM-type zinc finger. The Helicase ATP-binding domain occupies 590–751 (RALEDNQFGG…WSCFDFVLPN (162 aa)). Position 603–610 (603–610 (DEMGLGKT)) interacts with ATP. The DEAQ box signature appears at 702-705 (DEAQ). Residues 868–1022 (ALNIIYEALE…EDVNFFKSLS (155 aa)) enclose the Helicase C-terminal domain.

This sequence belongs to the SNF2/RAD54 helicase family.

This is an uncharacterized protein from Mycoplasma genitalium (strain ATCC 33530 / DSM 19775 / NCTC 10195 / G37) (Mycoplasmoides genitalium).